Here is a 461-residue protein sequence, read N- to C-terminus: tRNA modification GTPase MnmE (461 aa).

(6S)-5-formyl-5,6,7,8-tetrahydrofolate-binding residues include Arg27, Glu89, and Arg128. Residues 224 to 382 (GLATAIVGRP…LENAIEQLFF (159 aa)) enclose the TrmE-type G domain. Asn234 contacts K(+). Residues 234–239 (NVGKSS), 253–259 (TDIAGTT), and 278–281 (DTAG) each bind GTP. Ser238 serves as a coordination point for Mg(2+). 3 residues coordinate K(+): Thr253, Ile255, and Thr258. Residue Thr259 participates in Mg(2+) binding. Residue Lys461 coordinates (6S)-5-formyl-5,6,7,8-tetrahydrofolate.

The protein belongs to the TRAFAC class TrmE-Era-EngA-EngB-Septin-like GTPase superfamily. TrmE GTPase family. As to quaternary structure, homodimer. Heterotetramer of two MnmE and two MnmG subunits. K(+) is required as a cofactor.

The protein localises to the cytoplasm. Functionally, exhibits a very high intrinsic GTPase hydrolysis rate. Involved in the addition of a carboxymethylaminomethyl (cmnm) group at the wobble position (U34) of certain tRNAs, forming tRNA-cmnm(5)s(2)U34. This is tRNA modification GTPase MnmE from Lactobacillus johnsonii (strain CNCM I-12250 / La1 / NCC 533).